We begin with the raw amino-acid sequence, 533 residues long: Protein disulfide isomerase-like 1-5 (533 aa).

The first 22 residues, Met1–Ala22, serve as a signal peptide directing secretion. Thioredoxin domains are found at residues Leu51–Thr196 and Leu387–Gln516. The Nucleophile role is filled by Cys97. An N-linked (GlcNAc...) asparagine glycan is attached at Asn151. Catalysis depends on nucleophile residues Cys436 and Cys439. Cys436 and Cys439 are disulfide-bonded. The Prevents secretion from ER motif lies at Lys530–Leu533.

This sequence belongs to the protein disulfide isomerase family.

Its subcellular location is the endoplasmic reticulum lumen. The enzyme catalyses Catalyzes the rearrangement of -S-S- bonds in proteins.. Functionally, acts as a protein-folding catalyst that interacts with nascent polypeptides to catalyze the formation, isomerization, and reduction or oxidation of disulfide bonds. May play a role in storage protein biogenesis. The polypeptide is Protein disulfide isomerase-like 1-5 (PDIL1-5) (Oryza sativa subsp. japonica (Rice)).